Reading from the N-terminus, the 112-residue chain is Small ribosomal subunit protein bS6 (112 aa).

This sequence belongs to the bacterial ribosomal protein bS6 family.

Functionally, binds together with bS18 to 16S ribosomal RNA. The sequence is that of Small ribosomal subunit protein bS6 (rpsF) from Chlamydia muridarum (strain MoPn / Nigg).